The chain runs to 343 residues: Transmembrane protein 120A (343 aa).

At 1–132 (MQSPPPDPLG…KQAKFAYKDE (132 aa)) the chain is on the cytoplasmic side. Lys130 is a binding site for CoA. The helical transmembrane segment at 133–152 (YEKFKLYLTIILIVISFTCR) threads the bilayer. The Extracellular segment spans residues 153–158 (FLLNSR). A helical transmembrane segment spans residues 159 to 177 (VTDAAFNFLLVWYYCTLTI). Over 178 to 190 (RESILINNGSRIK) the chain is Cytoplasmic. Residues Ser187 and Arg188 each contribute to the CoA site. A helical transmembrane segment spans residues 191–209 (GWWVFHHYVSTFLSGVMLT). The Extracellular portion of the chain corresponds to 210–218 (WPDGLMYQK). A helical transmembrane segment spans residues 219–240 (FRNQFLSFSMYQSFVQFLQYYY). 4 residues coordinate CoA: Gln237, Tyr240, Gln241, and His283. Residues 241–270 (QSGCLYRLRALGERHTMDLTVEGFQSWMWR) lie on the Cytoplasmic side of the membrane. Residues 271–294 (GLTFLLPFLFFGHFWQLFNALTLF) traverse the membrane as a helical segment. Residues 295–304 (NLARDPECKE) lie on the Extracellular side of the membrane. A helical transmembrane segment spans residues 305 to 330 (WQVLMCGLPFLLLFLGNFFTTLRVVH). Residues 331–343 (QKFHSQQHGSKKD) are Cytoplasmic-facing. Lys332 contacts CoA.

This sequence belongs to the TMEM120 family. Homodimer. Forms heterooligomer with TMEM120B. Interacts with PKD2; TMEM120A inhibits PKD2 channel activity through the physical association of PKD2 with TMEM120A.

Its subcellular location is the cell membrane. It is found in the nucleus inner membrane. It localises to the endoplasmic reticulum. Its function is as follows. Multifunctional protein involved in mechanosensation, and plays an essential role in lipid metabolism and adipocyte differentiation. May function as a potential ion channel involved in sensing mechanical stimuli. Mediates the mechanosensitivity of the PKD2-TMEM120A channel complex through direct physical interaction. TMEM120A seems to affect mechanosensation by inhibiting PIEZO2 channels, possibly by altering cellular lipid content. TMEM120A is structurally similar to a lipid-modifying enzyme, ELOVL7, and contains a bound coenzyme A molecule, which suggests it might function as an enzyme in lipid metabolism. Additionnaly, implicated in innate immune response against Zika virus. Acts as a key activator of the antiviral signaling involving STING1. The polypeptide is Transmembrane protein 120A (Rattus norvegicus (Rat)).